Here is a 479-residue protein sequence, read N- to C-terminus: Ribulose bisphosphate carboxylase large chain (479 aa).

Residues 1-2 (MS) constitute a propeptide that is removed on maturation. Residues N123 and T173 each coordinate substrate. K175 functions as the Proton acceptor in the catalytic mechanism. K177 contacts substrate. K201, D203, and E204 together coordinate Mg(2+). K201 is subject to N6-carboxylysine. Residue S208 is modified to Phosphoserine. The active-site Proton acceptor is the H294. Substrate-binding residues include R295 and H327. T330 carries the phosphothreonine modification. S379 contributes to the substrate binding site.

It belongs to the RuBisCO large chain family. Type I subfamily. Heterohexadecamer of 8 large chains and 8 small chains; disulfide-linked. The disulfide link is formed within the large subunit homodimers. Mg(2+) serves as cofactor. Post-translationally, the disulfide bond which can form in the large chain dimeric partners within the hexadecamer appears to be associated with oxidative stress and protein turnover.

It localises to the plastid. The protein resides in the chloroplast. The enzyme catalyses 2 (2R)-3-phosphoglycerate + 2 H(+) = D-ribulose 1,5-bisphosphate + CO2 + H2O. It catalyses the reaction D-ribulose 1,5-bisphosphate + O2 = 2-phosphoglycolate + (2R)-3-phosphoglycerate + 2 H(+). In terms of biological role, ruBisCO catalyzes two reactions: the carboxylation of D-ribulose 1,5-bisphosphate, the primary event in carbon dioxide fixation, as well as the oxidative fragmentation of the pentose substrate in the photorespiration process. Both reactions occur simultaneously and in competition at the same active site. In Arabis hirsuta (Hairy rock-cress), this protein is Ribulose bisphosphate carboxylase large chain.